The primary structure comprises 872 residues: Alanine--tRNA ligase (872 aa).

Positions 567, 571, 669, and 673 each coordinate Zn(2+).

It belongs to the class-II aminoacyl-tRNA synthetase family. It depends on Zn(2+) as a cofactor.

It is found in the cytoplasm. The catalysed reaction is tRNA(Ala) + L-alanine + ATP = L-alanyl-tRNA(Ala) + AMP + diphosphate. In terms of biological role, catalyzes the attachment of alanine to tRNA(Ala) in a two-step reaction: alanine is first activated by ATP to form Ala-AMP and then transferred to the acceptor end of tRNA(Ala). Also edits incorrectly charged Ser-tRNA(Ala) and Gly-tRNA(Ala) via its editing domain. This Streptococcus agalactiae serotype III (strain NEM316) protein is Alanine--tRNA ligase.